A 1727-amino-acid chain; its full sequence is DNA-directed RNA polymerase II subunit rpb1 (1727 aa).

Zn(2+)-binding residues include Cys66, Cys69, Cys76, His79, Cys106, Cys109, Cys147, and Cys175. Mg(2+) is bound by residues Asp486, Asp488, and Asp490. A bridging helix region spans residues 819–831; the sequence is PQEFFFHAMGGRE. A Glycyl lysine isopeptide (Lys-Gly) (interchain with G-Cter in ubiquitin) cross-link involves residue Lys1266. 2 disordered regions span residues 1478–1512 and 1551–1727; these read EPSN…YDAP and PTYS…NKKK. Over residues 1480 to 1505 the composition is skewed to polar residues; that stretch reads SNVSYPDTPGSQTPSYSYGDGSTTPF. Tandem repeats lie at residues 1553–1559, 1560–1566, 1567–1573, 1574–1580, 1581–1587, 1588–1594, 1595–1601, 1602–1608, 1609–1615, 1616–1622, 1623–1629, 1630–1636, 1637–1643, 1644–1650, 1651–1657, 1658–1664, 1665–1671, 1672–1678, 1679–1685, 1686–1692, 1693–1699, 1700–1706, and 1707–1713. The interval 1553 to 1713 is C-terminal domain (CTD); 23 X 7 AA tandem repeats of Y-S-P-[ST]-S-P-[FST]; it reads YSPTSPSYSP…SPSYSPSSPT (161 aa).

Belongs to the RNA polymerase beta' chain family. Component of the RNA polymerase II (Pol II) complex consisting of 12 subunits. In terms of processing, the tandem heptapeptide repeats in the C-terminal domain (CTD) can be highly phosphorylated. The phosphorylation activates Pol II. Phosphorylation occurs mainly at residues 'Ser-2' and 'Ser-5' of the heptapeptide repeat. The phosphorylation state is believed to result from the balanced action of site-specific CTD kinases and phosphatase, and a 'CTD code' that specifies the position of Pol II within the transcription cycle has been proposed. Following transcription stress, the elongating form of RNA polymerase II (RNA pol IIo) is polyubiquitinated via 'Lys-63'-linkages on Lys-1266 at DNA damage sites without leading to degradation: ubiquitination promotes RNA pol IIo backtracking to allow access by the transcription-coupled nucleotide excision repair (TC-NER) machinery. Subsequent DEF1-dependent polyubiquitination by the elongin complex via 'Lys-48'-linkages may lead to proteasome-mediated degradation; presumably at stalled RNA pol II where TC-NER has failed, to halt global transcription and enable 'last resort' DNA repair pathways.

It is found in the nucleus. It carries out the reaction RNA(n) + a ribonucleoside 5'-triphosphate = RNA(n+1) + diphosphate. Its function is as follows. DNA-dependent RNA polymerase catalyzes the transcription of DNA into RNA using the four ribonucleoside triphosphates as substrates. Largest and catalytic component of RNA polymerase II which synthesizes mRNA precursors and many functional non-coding RNAs. Forms the polymerase active center together with the second largest subunit. Pol II is the central component of the basal RNA polymerase II transcription machinery. It is composed of mobile elements that move relative to each other. RPB1 is part of the core element with the central large cleft, the clamp element that moves to open and close the cleft and the jaws that are thought to grab the incoming DNA template. At the start of transcription, a single-stranded DNA template strand of the promoter is positioned within the central active site cleft of Pol II. A bridging helix emanates from RPB1 and crosses the cleft near the catalytic site and is thought to promote translocation of Pol II by acting as a ratchet that moves the RNA-DNA hybrid through the active site by switching from straight to bent conformations at each step of nucleotide addition. During transcription elongation, Pol II moves on the template as the transcript elongates. Elongation is influenced by the phosphorylation status of the C-terminal domain (CTD) of Pol II largest subunit (RPB1), which serves as a platform for assembly of factors that regulate transcription initiation, elongation, termination and mRNA processing. The sequence is that of DNA-directed RNA polymerase II subunit rpb1 (polr2a) from Dictyostelium discoideum (Social amoeba).